A 116-amino-acid polypeptide reads, in one-letter code: MSVESFTPTALEFTPGAAHKVKTLVSEEGNDRLKLRVFVTGGGCSGFQYGFTFDEDVAEDDTIVEREGVALVVDPMSFQYLAGAEVDYQEGLEGSRFVIKNPNATTTCGCGSSFSI.

Residues cysteine 44, cysteine 108, and cysteine 110 each coordinate iron-sulfur cluster.

Belongs to the HesB/IscA family. In terms of assembly, homodimer. It depends on iron-sulfur cluster as a cofactor.

In terms of biological role, required for insertion of 4Fe-4S clusters for at least IspG. The protein is Iron-sulfur cluster insertion protein ErpA of Pseudomonas entomophila (strain L48).